The primary structure comprises 381 residues: L-lactate dehydrogenase (381 aa).

In terms of domain architecture, FMN hydroxy acid dehydrogenase spans 1–380; it reads MIISASTDYR…NRDSLAVSER (380 aa). Tyrosine 24 contacts substrate. Residues serine 106 and glutamine 127 each coordinate FMN. A substrate-binding site is contributed by tyrosine 129. Position 155 (threonine 155) interacts with FMN. Arginine 164 contacts substrate. Lysine 251 contacts FMN. Catalysis depends on histidine 275, which acts as the Proton acceptor. Arginine 278 contacts substrate. 306 to 330 contributes to the FMN binding site; that stretch reads DSGIRTGLDVVRMIALGADSVLLGR.

This sequence belongs to the FMN-dependent alpha-hydroxy acid dehydrogenase family. Requires FMN as cofactor.

It localises to the cell inner membrane. It carries out the reaction (S)-lactate + A = pyruvate + AH2. Catalyzes the conversion of L-lactate to pyruvate. Is coupled to the respiratory chain. This Yersinia pseudotuberculosis serotype O:1b (strain IP 31758) protein is L-lactate dehydrogenase.